Reading from the N-terminus, the 1093-residue chain is Protein transport protein Sec24A (1093 aa).

Disordered regions lie at residues 1–29 (MSQP…SGSP), 60–168 (HPIP…TSLT), 189–226 (GPSV…ALTP), and 294–328 (SLPP…TQTP). Polar residues-rich tracts occupy residues 112 to 126 (ASQN…SSSF) and 138 to 168 (WQYN…TSLT). Composition is skewed to pro residues over residues 191–201 (SVPPLVNPPLP) and 209–221 (PHGP…PPPV). Residues 299–328 (YQNTTPPGATGVPPSSLNYPSGPQAFTQTP) show a composition bias toward polar residues. The Zn(2+) site is built by cysteine 431, cysteine 434, cysteine 452, and cysteine 455. The tract at residues 431–455 (CRSCRTYINPFVSFLDQRRWKCNLC) is zinc finger-like. The Gelsolin-like repeat unit spans residues 966–1038 (PQPPILQLSV…TPESARIIAF (73 aa)).

The protein belongs to the SEC23/SEC24 family. SEC24 subfamily. In terms of assembly, COPII is composed of at least five proteins: the Sec23/24 complex, the Sec13/31 complex and Sar1. Interacts with TMED2. Interacts (as part of the Sec23/24 complex) with SEC22B; recruits SEC22B into COPII-coated vesicles for its transport from the endoplasmic reticulum to the Golgi. Interacts with STING1; promoting STING1 translocation to COPII vesicles in a STEEP1-dependent manner. Interacts with TMEM39A. Interacts with SACM1L; this interaction is reduced in the absence of TMEM39A. Interacts with kinase FAM20C; transport of FAM20C from the endoplasmic reticulum to the Golgi is likely to be mediated by COPII vesicles.

The protein resides in the cytoplasmic vesicle. It is found in the COPII-coated vesicle membrane. It localises to the endoplasmic reticulum membrane. Its subcellular location is the cytoplasm. The protein localises to the cytosol. Component of the coat protein complex II (COPII) which promotes the formation of transport vesicles from the endoplasmic reticulum (ER). The coat has two main functions, the physical deformation of the endoplasmic reticulum membrane into vesicles and the selection of cargo molecules for their transport to the Golgi complex. Plays a central role in cargo selection within the COPII complex and together with SEC24B may have a different specificity compared to SEC24C and SEC24D. May package preferentially cargos with cytoplasmic DxE or LxxLE motifs and may also recognize conformational epitopes. This chain is Protein transport protein Sec24A, found in Homo sapiens (Human).